Consider the following 236-residue polypeptide: Kinetochore protein Spc25 (236 aa).

Positions 44-106 form a coiled coil; that stretch reads KNIISAKEAI…DMEAQLLRHT (63 aa). The tract at residues 194–217 is disordered; that stretch reads EVAGASPVTPSGSERPKATSKHSN.

This sequence belongs to the SPC25 family. In terms of assembly, component of the Ndc80 complex, which is composed of Ndc80, Nuf2 and Spc25.

Its subcellular location is the nucleus. It localises to the chromosome. It is found in the centromere. The protein resides in the kinetochore. In terms of biological role, acts as a component of the essential kinetochore-associated Ndc80 complex, which is required for chromosome segregation and spindle checkpoint activity during meiosis and mitosis. Required for kinetochore integrity and the organization of stable microtubule binding sites in the outer plate of the kinetochore. Participates in SAC signaling that responds specifically to disruptions in spindle microtubule dynamics. The NDC80 complex synergistically enhances the affinity of the SKA1 complex for microtubules and may allow the NDC80 complex to track depolymerizing microtubules. The chain is Kinetochore protein Spc25 from Drosophila persimilis (Fruit fly).